Here is a 74-residue protein sequence, read N- to C-terminus: Translational regulator CsrA (74 aa).

Belongs to the CsrA/RsmA family. As to quaternary structure, homodimer; the beta-strands of each monomer intercalate to form a hydrophobic core, while the alpha-helices form wings that extend away from the core.

Its subcellular location is the cytoplasm. In terms of biological role, a translational regulator that binds mRNA to regulate translation initiation and/or mRNA stability. Usually binds in the 5'-UTR at or near the Shine-Dalgarno sequence preventing ribosome-binding, thus repressing translation. Its main target seems to be the major flagellin gene, while its function is anatagonized by FliW. The protein is Translational regulator CsrA of Bacillus velezensis (strain DSM 23117 / BGSC 10A6 / LMG 26770 / FZB42) (Bacillus amyloliquefaciens subsp. plantarum).